Here is a 394-residue protein sequence, read N- to C-terminus: Galactose-3-O-sulfotransferase 2 (394 aa).

Topologically, residues 1–8 (MWGSQHRS) are cytoplasmic. The chain crosses the membrane as a helical; Signal-anchor for type II membrane protein span at residues 9–29 (FQVALWFLVLAVFLLVGFLHV). Residues 30-394 (DFRLLIPDKV…TPKDIPFLKK (365 aa)) are Lumenal-facing. Residues Asn-72, Asn-176, Asn-284, and Asn-326 are each glycosylated (N-linked (GlcNAc...) asparagine).

Belongs to the galactose-3-O-sulfotransferase family.

The protein localises to the golgi apparatus. It is found in the golgi stack membrane. The protein operates within protein modification; carbohydrate sulfation. With respect to regulation, strongly inhibited by Cu(2+) and Zn(2+). Functionally, transfers a sulfate group to the hydroxyl group at C3 of non-reducing beta-galactosyl residues. Acts both on type 1 (Gal-beta-1,3-GlcNAc) and type 2 (Gal-beta-1,4-GlcNAc) chains with similar efficiency. The protein is Galactose-3-O-sulfotransferase 2 (Gal3st2) of Mus musculus (Mouse).